The sequence spans 180 residues: GTP cyclohydrolase 1 (180 aa).

Cys71, His74, and Cys142 together coordinate Zn(2+).

Belongs to the GTP cyclohydrolase I family. Toroid-shaped homodecamer, composed of two pentamers of five dimers.

The catalysed reaction is GTP + H2O = 7,8-dihydroneopterin 3'-triphosphate + formate + H(+). It participates in cofactor biosynthesis; 7,8-dihydroneopterin triphosphate biosynthesis; 7,8-dihydroneopterin triphosphate from GTP: step 1/1. This is GTP cyclohydrolase 1 (folE) from Helicobacter pylori (strain J99 / ATCC 700824) (Campylobacter pylori J99).